A 413-amino-acid polypeptide reads, in one-letter code: Gamma-glutamyl phosphate reductase (413 aa).

Belongs to the gamma-glutamyl phosphate reductase family.

It localises to the cytoplasm. The catalysed reaction is L-glutamate 5-semialdehyde + phosphate + NADP(+) = L-glutamyl 5-phosphate + NADPH + H(+). The protein operates within amino-acid biosynthesis; L-proline biosynthesis; L-glutamate 5-semialdehyde from L-glutamate: step 2/2. Catalyzes the NADPH-dependent reduction of L-glutamate 5-phosphate into L-glutamate 5-semialdehyde and phosphate. The product spontaneously undergoes cyclization to form 1-pyrroline-5-carboxylate. This chain is Gamma-glutamyl phosphate reductase, found in Salinispora tropica (strain ATCC BAA-916 / DSM 44818 / JCM 13857 / NBRC 105044 / CNB-440).